Reading from the N-terminus, the 138-residue chain is Acidic phospholipase A2 PePLA2 (138 aa).

The signal sequence occupies residues 1 to 16 (MRTLWIMAVLLLGVEG). Cystine bridges form between C42-C131, C44-C60, C59-C110, C65-C138, C66-C103, C73-C97, and C91-C101. Ca(2+) contacts are provided by Y43, G45, and G47. H63 is a catalytic residue. D64 contributes to the Ca(2+) binding site. The active site involves D104.

It belongs to the phospholipase A2 family. Group II subfamily. D49 sub-subfamily. Ca(2+) is required as a cofactor. As to expression, expressed by the venom gland.

The protein resides in the secreted. It carries out the reaction a 1,2-diacyl-sn-glycero-3-phosphocholine + H2O = a 1-acyl-sn-glycero-3-phosphocholine + a fatty acid + H(+). Functionally, PLA2 catalyzes the calcium-dependent hydrolysis of the 2-acyl groups in 3-sn-phosphoglycerides. This Protobothrops elegans (Elegant pitviper) protein is Acidic phospholipase A2 PePLA2.